Here is a 256-residue protein sequence, read N- to C-terminus: Probable hydroxyacylglutathione hydrolase glo2 (256 aa).

The Zn(2+) site is built by H63, H65, D67, H68, H118, and D139. Substrate is bound by residues R148, 178-180, and 250-253; these read HEY and RDMK. H178 is a Zn(2+) binding site.

It belongs to the metallo-beta-lactamase superfamily. Glyoxalase II family. Zn(2+) serves as cofactor.

It localises to the cytoplasm. The protein resides in the nucleus. It catalyses the reaction an S-(2-hydroxyacyl)glutathione + H2O = a 2-hydroxy carboxylate + glutathione + H(+). The enzyme catalyses (R)-S-lactoylglutathione + H2O = (R)-lactate + glutathione + H(+). It functions in the pathway secondary metabolite metabolism; methylglyoxal degradation; (R)-lactate from methylglyoxal: step 2/2. Functionally, thiolesterase that catalyzes the hydrolysis of S-D-lactoylglutathione to form glutathione and D-lactic acid. Involved in the metabolism of methylglyoxal, a toxic compound for yeast proliferation, by converting methylglyoxal to lactate via S-D-lactoylglutathione by sequential enzyme reactions catalyzed by glyoxalase I and glyoxalase II. The polypeptide is Probable hydroxyacylglutathione hydrolase glo2 (glo2) (Schizosaccharomyces pombe (strain 972 / ATCC 24843) (Fission yeast)).